The following is a 277-amino-acid chain: 14-3-3 protein (277 aa).

Residues 252–277 (LQTQEQQQQPVGEGAEAPKVEATEQQ) are disordered. Over residues 267-277 (EAPKVEATEQQ) the composition is skewed to basic and acidic residues.

This sequence belongs to the 14-3-3 family.

The chain is 14-3-3 protein from Eimeria tenella (Coccidian parasite).